The chain runs to 333 residues: 4-hydroxy-3-methylbut-2-enyl diphosphate reductase (333 aa).

Cys20 lines the [4Fe-4S] cluster pocket. The (2E)-4-hydroxy-3-methylbut-2-enyl diphosphate site is built by His49 and His85. His49 and His85 together coordinate dimethylallyl diphosphate. His49 and His85 together coordinate isopentenyl diphosphate. [4Fe-4S] cluster is bound at residue Cys107. Residue His135 coordinates (2E)-4-hydroxy-3-methylbut-2-enyl diphosphate. Dimethylallyl diphosphate is bound at residue His135. His135 serves as a coordination point for isopentenyl diphosphate. Glu137 acts as the Proton donor in catalysis. Residue Thr176 participates in (2E)-4-hydroxy-3-methylbut-2-enyl diphosphate binding. Cys206 contacts [4Fe-4S] cluster. 4 residues coordinate (2E)-4-hydroxy-3-methylbut-2-enyl diphosphate: Ser234, Ser235, Asn236, and Ser279. 4 residues coordinate dimethylallyl diphosphate: Ser234, Ser235, Asn236, and Ser279. Ser234, Ser235, Asn236, and Ser279 together coordinate isopentenyl diphosphate.

This sequence belongs to the IspH family. The cofactor is [4Fe-4S] cluster.

The enzyme catalyses isopentenyl diphosphate + 2 oxidized [2Fe-2S]-[ferredoxin] + H2O = (2E)-4-hydroxy-3-methylbut-2-enyl diphosphate + 2 reduced [2Fe-2S]-[ferredoxin] + 2 H(+). The catalysed reaction is dimethylallyl diphosphate + 2 oxidized [2Fe-2S]-[ferredoxin] + H2O = (2E)-4-hydroxy-3-methylbut-2-enyl diphosphate + 2 reduced [2Fe-2S]-[ferredoxin] + 2 H(+). Its pathway is isoprenoid biosynthesis; dimethylallyl diphosphate biosynthesis; dimethylallyl diphosphate from (2E)-4-hydroxy-3-methylbutenyl diphosphate: step 1/1. It functions in the pathway isoprenoid biosynthesis; isopentenyl diphosphate biosynthesis via DXP pathway; isopentenyl diphosphate from 1-deoxy-D-xylulose 5-phosphate: step 6/6. Its function is as follows. Catalyzes the conversion of 1-hydroxy-2-methyl-2-(E)-butenyl 4-diphosphate (HMBPP) into a mixture of isopentenyl diphosphate (IPP) and dimethylallyl diphosphate (DMAPP). Acts in the terminal step of the DOXP/MEP pathway for isoprenoid precursor biosynthesis. The chain is 4-hydroxy-3-methylbut-2-enyl diphosphate reductase from Rhizobium johnstonii (strain DSM 114642 / LMG 32736 / 3841) (Rhizobium leguminosarum bv. viciae).